Here is a 252-residue protein sequence, read N- to C-terminus: Phosphosulfolactate synthase (252 aa).

Belongs to the phosphosulfolactate synthase family.

It carries out the reaction (2R)-O-phospho-3-sulfolactate = phosphoenolpyruvate + sulfite + H(+). Functionally, catalyzes the addition of sulfite to phosphoenolpyruvate (PEP) to yield (2R)-phospho-3-sulfolactate (PSL). Is probably involved in the biosynthesis of L-sulfolactate, which is a major constituent of sporulating cells and mature spores. The polypeptide is Phosphosulfolactate synthase (yitD) (Bacillus subtilis (strain 168)).